The sequence spans 346 residues: Guanine nucleotide-binding protein subunit beta-2 (346 aa).

WD repeat units follow at residues 57-96 (GHIN…KVQI), 99-138 (LRSA…ASGV), 147-185 (GYEG…KTMD), 188-227 (GHAG…HKQM), 230-269 (GHDM…QIAQ), 274-313 (QKNT…HTGT), and 316-346 (GHEN…RLWL).

This sequence belongs to the WD repeat G protein beta family. In terms of assembly, g proteins are composed of 3 units, alpha, beta and gamma. Interacts with Ggamma30A/Guanine nucleotide-binding protein subunit gamma-e. Expressed exclusively in photoreceptor cells in the compound eye (at protein level).

The protein resides in the cytoplasm. It is found in the cell projection. The protein localises to the axon. It localises to the rhabdomere. Its function is as follows. Guanine nucleotide-binding proteins (G proteins) are involved as a modulator or transducer in various transmembrane signaling systems. The beta and gamma chains are required for the GTPase activity, for replacement of GDP by GTP, and for G protein-effector interaction. The polypeptide is Guanine nucleotide-binding protein subunit beta-2 (Gbeta76C) (Drosophila melanogaster (Fruit fly)).